The chain runs to 311 residues: Bifunctional pinoresinol-lariciresinol reductase (311 aa).

Residues 10-16, arginine 35, and lysine 44 each bind NADP(+); that span reads GGTGYLG. Lysine 138 serves as the catalytic Proton acceptor. Arginine 142 contacts NADP(+). Substrate is bound at residue histidine 270.

The protein belongs to the NmrA-type oxidoreductase family. Isoflavone reductase subfamily. In terms of assembly, dimer. Expressed in rhizomes, stems, and leaves.

It carries out the reaction (-)-secoisolariciresinol + NADP(+) = (+)-lariciresinol + NADPH + H(+). It catalyses the reaction (+)-lariciresinol + NADP(+) = (+)-pinoresinol + NADPH + H(+). The protein operates within aromatic compound metabolism; phenylpropanoid biosynthesis. Its function is as follows. Reductase involved in lignan biosynthesis. Also involved in the biosynthesis of etoposide, a chemotherapeutic compound of the topoisomerase inhibitor family. Catalyzes the enantioselective sequential conversion of (+)-pinoresinol into (+)-lariciresinol and of (+)-lariciresinol into (-)-secoisolariciresinol. Abstracts the 4R-hydride from the NADPH cofactor during catalysis. The chain is Bifunctional pinoresinol-lariciresinol reductase from Sinopodophyllum hexandrum (Himalayan may apple).